Consider the following 151-residue polypeptide: Prefoldin subunit alpha (151 aa).

Positions 120-151 (TVEEETASLEEKAQQAQQQQMQQLQQMQQEDE) are disordered. The segment covering 133–151 (QQAQQQQMQQLQQMQQEDE) has biased composition (low complexity).

This sequence belongs to the prefoldin subunit alpha family. As to quaternary structure, heterohexamer of two alpha and four beta subunits.

It localises to the cytoplasm. Functionally, molecular chaperone capable of stabilizing a range of proteins. Seems to fulfill an ATP-independent, HSP70-like function in archaeal de novo protein folding. This Natronomonas pharaonis (strain ATCC 35678 / DSM 2160 / CIP 103997 / JCM 8858 / NBRC 14720 / NCIMB 2260 / Gabara) (Halobacterium pharaonis) protein is Prefoldin subunit alpha.